Here is a 64-residue protein sequence, read N- to C-terminus: MSGRQGGKAKPLKAAKKTEKDLSEEDVEFKKKQQEEAKKIKEMAAKAGQRGPLLGGGIKKSGKK.

A disordered region spans residues 1-64 (MSGRQGGKAK…GGGIKKSGKK (64 aa)). Positions 21 to 50 (DLSEEDVEFKKKQQEEAKKIKEMAAKAGQR) form a coiled coil. The segment covering 28-44 (EFKKKQQEEAKKIKEMA) has biased composition (basic and acidic residues). Positions 53 to 64 (LLGGGIKKSGKK) are enriched in gly residues.

It belongs to the TMA7 family.

The sequence is that of Translation machinery-associated protein 7 homolog from Caenorhabditis elegans.